Here is a 472-residue protein sequence, read N- to C-terminus: NADH-quinone oxidoreductase subunit N 2 (472 aa).

13 helical membrane-spanning segments follow: residues 3–23 (WMSFAPELITLTSALWFLLLS), 34–54 (HVAALVLSALGLAACLASVGA), 67–87 (LFSQVFKVLLAAGLFLIVTLC), 106–126 (FVCTLAMMLLVGANHFLVVFI), 156–176 (FLVGIFASGVMIFGLALLYGA), 198–218 (VVIGLLLTLSGFFFKLAVFPF), 233–253 (VSAYIATASKVAAIGVLVRVI), 263–283 (LVHVLAVLSVVSMTVGNLAAI), 291–311 (LLAYSTVAHAGYVLIGVLSMN), 317–337 (AAVFYAFALLVMKFTAFLVLV), 360–380 (ILALALMVSLFSLAGIPPTVG), 398–418 (TLVLIAMINVVISLYYYLLVI), and 441–461 (LLSGVLVIAMVAAGFFPNQII).

Belongs to the complex I subunit 2 family. In terms of assembly, NDH-1 is composed of 14 different subunits. Subunits NuoA, H, J, K, L, M, N constitute the membrane sector of the complex.

The protein resides in the cell inner membrane. The catalysed reaction is a quinone + NADH + 5 H(+)(in) = a quinol + NAD(+) + 4 H(+)(out). Functionally, NDH-1 shuttles electrons from NADH, via FMN and iron-sulfur (Fe-S) centers, to quinones in the respiratory chain. The immediate electron acceptor for the enzyme in this species is believed to be ubiquinone. Couples the redox reaction to proton translocation (for every two electrons transferred, four hydrogen ions are translocated across the cytoplasmic membrane), and thus conserves the redox energy in a proton gradient. This chain is NADH-quinone oxidoreductase subunit N 2, found in Syntrophobacter fumaroxidans (strain DSM 10017 / MPOB).